The sequence spans 536 residues: Ribulokinase (536 aa).

This sequence belongs to the ribulokinase family.

It catalyses the reaction D-ribulose + ATP = D-ribulose 5-phosphate + ADP + H(+). The catalysed reaction is L-ribulose + ATP = L-ribulose 5-phosphate + ADP + H(+). It functions in the pathway carbohydrate degradation; L-arabinose degradation via L-ribulose; D-xylulose 5-phosphate from L-arabinose (bacterial route): step 2/3. This Staphylococcus epidermidis (strain ATCC 35984 / DSM 28319 / BCRC 17069 / CCUG 31568 / BM 3577 / RP62A) protein is Ribulokinase.